The sequence spans 228 residues: Ribulose-phosphate 3-epimerase (228 aa).

S12 lines the substrate pocket. Residues H37, D39, and H70 each contribute to the a divalent metal cation site. D39 acts as the Proton acceptor in catalysis. Substrate-binding positions include H70, 146–149, 176–178, and 198–199; these read GFGG, DGG, and GS. D176 lines the a divalent metal cation pocket. The active-site Proton donor is D176.

This sequence belongs to the ribulose-phosphate 3-epimerase family. It depends on a divalent metal cation as a cofactor.

The catalysed reaction is D-ribulose 5-phosphate = D-xylulose 5-phosphate. It functions in the pathway carbohydrate degradation. Its function is as follows. Catalyzes the reversible epimerization of D-ribulose 5-phosphate to D-xylulose 5-phosphate. This is Ribulose-phosphate 3-epimerase from Rhodobacter capsulatus (Rhodopseudomonas capsulata).